Consider the following 539-residue polypeptide: Peptide chain release factor 3 (539 aa).

The tr-type G domain occupies 14-283; the sequence is EKRRNFAIIS…AFLEYALQPE (270 aa). GTP contacts are provided by residues 23–30, 91–95, and 145–148; these read SHPDAGKT, DTPGH, and NKLD.

Belongs to the TRAFAC class translation factor GTPase superfamily. Classic translation factor GTPase family. PrfC subfamily.

The protein resides in the cytoplasm. Increases the formation of ribosomal termination complexes and stimulates activities of RF-1 and RF-2. It binds guanine nucleotides and has strong preference for UGA stop codons. It may interact directly with the ribosome. The stimulation of RF-1 and RF-2 is significantly reduced by GTP and GDP, but not by GMP. This Rippkaea orientalis (strain PCC 8801 / RF-1) (Cyanothece sp. (strain PCC 8801)) protein is Peptide chain release factor 3.